Reading from the N-terminus, the 107-residue chain is Nucleoid-associated protein AZOSEA06390 (107 aa).

The protein belongs to the YbaB/EbfC family. As to quaternary structure, homodimer.

The protein resides in the cytoplasm. It is found in the nucleoid. Its function is as follows. Binds to DNA and alters its conformation. May be involved in regulation of gene expression, nucleoid organization and DNA protection. In Aromatoleum aromaticum (strain DSM 19018 / LMG 30748 / EbN1) (Azoarcus sp. (strain EbN1)), this protein is Nucleoid-associated protein AZOSEA06390.